The following is a 452-amino-acid chain: Elongation factor Tu, mitochondrial (452 aa).

The N-terminal 43 residues, 1 to 43 (MAAATLLRATPRFSGLCASPTPFLQGRLRPLKAPASPFLCRGL), are a transit peptide targeting the mitochondrion. A tr-type G domain is found at 55–251 (KPHVNVGTIG…AVDTYIPVPT (197 aa)). Positions 64-71 (GHVDHGKT) are G1. Positions 67, 69, 70, 71, and 72 each coordinate GTP. Threonine 71 is a Mg(2+) binding site. Position 79 is an N6-acetyllysine (lysine 79). The residue at position 88 (lysine 88) is an N6-acetyllysine; alternate. The residue at position 88 (lysine 88) is an N6-succinyllysine; alternate. Residues 105–109 (GITIN) form a G2 region. The G3 stretch occupies residues 126-129 (DCPG). Residues asparagine 181, aspartate 184, serine 219, alanine 220, and leucine 221 each contribute to the GTP site. The interval 181 to 184 (NKAD) is G4. Residues 219-221 (SAL) form a G5 region. Lysine 234 carries the post-translational modification N6-succinyllysine. Residue lysine 256 is modified to N6-acetyllysine. The residue at position 278 (threonine 278) is a Phosphothreonine. N6-succinyllysine is present on lysine 286. Serine 312 bears the Phosphoserine mark. Residues lysine 361 and lysine 418 each carry the N6-acetyllysine modification.

This sequence belongs to the TRAFAC class translation factor GTPase superfamily. Classic translation factor GTPase family. EF-Tu/EF-1A subfamily. In terms of assembly, interacts with NLRX1. Interacts with ATG16L1.

It is found in the mitochondrion. The enzyme catalyses GTP + H2O = GDP + phosphate + H(+). GTP hydrolase that promotes the GTP-dependent binding of aminoacyl-tRNA to the A-site of ribosomes during protein biosynthesis. Also plays a role in the regulation of autophagy and innate immunity. Recruits ATG5-ATG12 and NLRX1 at mitochondria and serves as a checkpoint of the RIGI-MAVS pathway. In turn, inhibits RLR-mediated type I interferon while promoting autophagy. The protein is Elongation factor Tu, mitochondrial (Tufm) of Mus musculus (Mouse).